The primary structure comprises 272 residues: Cell division protein FtsQ (272 aa).

Over 1–43 (MEYNPPNTRERIVARRQRMRRNSTEPVVPGWRWRLREGLRSGR) the chain is Cytoplasmic. Residues 44-64 (IVSGIVFVISCFALFYVLFSS) traverse the membrane as a helical segment. Residues 65 to 272 (RFRVQTVEVV…FYQYRPDGSS (208 aa)) are Extracellular-facing. A POTRA domain is found at 66–133 (FRVQTVEVVG…DRARIVIVER (68 aa)).

It belongs to the FtsQ/DivIB family. FtsQ subfamily.

It is found in the cell membrane. Functionally, essential cell division protein. This is Cell division protein FtsQ from Chloroflexus aurantiacus (strain ATCC 29366 / DSM 635 / J-10-fl).